Here is a 343-residue protein sequence, read N- to C-terminus: Protein RecA (343 aa).

Position 66-73 (66-73 (GPESSGKT)) interacts with ATP.

The protein belongs to the RecA family.

The protein resides in the cytoplasm. In terms of biological role, can catalyze the hydrolysis of ATP in the presence of single-stranded DNA, the ATP-dependent uptake of single-stranded DNA by duplex DNA, and the ATP-dependent hybridization of homologous single-stranded DNAs. It interacts with LexA causing its activation and leading to its autocatalytic cleavage. In Nitrosomonas europaea (strain ATCC 19718 / CIP 103999 / KCTC 2705 / NBRC 14298), this protein is Protein RecA.